The sequence spans 349 residues: Phenylalanine--tRNA ligase alpha subunit (349 aa).

Position 259 (Glu-259) interacts with Mg(2+).

The protein belongs to the class-II aminoacyl-tRNA synthetase family. Phe-tRNA synthetase alpha subunit type 1 subfamily. Tetramer of two alpha and two beta subunits. The cofactor is Mg(2+).

It is found in the cytoplasm. The catalysed reaction is tRNA(Phe) + L-phenylalanine + ATP = L-phenylalanyl-tRNA(Phe) + AMP + diphosphate + H(+). This Lactobacillus helveticus (strain DPC 4571) protein is Phenylalanine--tRNA ligase alpha subunit.